A 306-amino-acid polypeptide reads, in one-letter code: Triplex capsid protein 2 (306 aa).

The protein belongs to the herpesviridae TRX2 protein family. In terms of assembly, interacts with TRX1 and major capisd protein/MCP.

It localises to the virion. The protein localises to the host nucleus. Its function is as follows. Structural component of the T=16 icosahedral capsid. The capsid is composed of pentamers and hexamers of major capsid protein/MCP, which are linked together by heterotrimers called triplexes. These triplexes are formed by a single molecule of triplex protein 1/TRX1 and two copies of triplex protein 2/TRX2. Additionally, TRX1 is required for efficient transport of TRX2 to the nucleus, which is the site of capsid assembly. The chain is Triplex capsid protein 2 from Human cytomegalovirus (strain AD169) (HHV-5).